The chain runs to 198 residues: Peptidyl-tRNA hydrolase (198 aa).

Tyrosine 15 serves as a coordination point for tRNA. Histidine 20 (proton acceptor) is an active-site residue. Residues phenylalanine 65, asparagine 67, and asparagine 113 each contribute to the tRNA site.

The protein belongs to the PTH family. Monomer.

Its subcellular location is the cytoplasm. The catalysed reaction is an N-acyl-L-alpha-aminoacyl-tRNA + H2O = an N-acyl-L-amino acid + a tRNA + H(+). In terms of biological role, hydrolyzes ribosome-free peptidyl-tRNAs (with 1 or more amino acids incorporated), which drop off the ribosome during protein synthesis, or as a result of ribosome stalling. Its function is as follows. Catalyzes the release of premature peptidyl moieties from peptidyl-tRNA molecules trapped in stalled 50S ribosomal subunits, and thus maintains levels of free tRNAs and 50S ribosomes. The protein is Peptidyl-tRNA hydrolase of Ehrlichia chaffeensis (strain ATCC CRL-10679 / Arkansas).